We begin with the raw amino-acid sequence, 261 residues long: 3-methyl-2-oxobutanoate hydroxymethyltransferase (261 aa).

Mg(2+)-binding residues include D44 and D83. Residues 44–45 (DS), D83, and K112 contribute to the 3-methyl-2-oxobutanoate site. E114 provides a ligand contact to Mg(2+). E181 serves as the catalytic Proton acceptor.

The protein belongs to the PanB family. Homodecamer; pentamer of dimers. Mg(2+) serves as cofactor.

Its subcellular location is the cytoplasm. The catalysed reaction is 3-methyl-2-oxobutanoate + (6R)-5,10-methylene-5,6,7,8-tetrahydrofolate + H2O = 2-dehydropantoate + (6S)-5,6,7,8-tetrahydrofolate. It participates in cofactor biosynthesis; (R)-pantothenate biosynthesis; (R)-pantoate from 3-methyl-2-oxobutanoate: step 1/2. Functionally, catalyzes the reversible reaction in which hydroxymethyl group from 5,10-methylenetetrahydrofolate is transferred onto alpha-ketoisovalerate to form ketopantoate. The sequence is that of 3-methyl-2-oxobutanoate hydroxymethyltransferase from Acidithiobacillus ferrooxidans (strain ATCC 23270 / DSM 14882 / CIP 104768 / NCIMB 8455) (Ferrobacillus ferrooxidans (strain ATCC 23270)).